We begin with the raw amino-acid sequence, 390 residues long: 1-deoxy-D-xylulose 5-phosphate reductoisomerase (390 aa).

7 residues coordinate NADPH: Thr10, Gly11, Ser12, Ile13, Gly36, Asn38, and Asn124. Lys125 contacts 1-deoxy-D-xylulose 5-phosphate. Glu126 contributes to the NADPH binding site. Asp150 contacts Mn(2+). 4 residues coordinate 1-deoxy-D-xylulose 5-phosphate: Ser151, Glu152, Ser176, and His199. Mn(2+) is bound at residue Glu152. Gly205 contacts NADPH. The 1-deoxy-D-xylulose 5-phosphate site is built by Ser212, Asn217, Lys218, and Glu221. Position 221 (Glu221) interacts with Mn(2+).

This sequence belongs to the DXR family. Requires Mg(2+) as cofactor. It depends on Mn(2+) as a cofactor.

The enzyme catalyses 2-C-methyl-D-erythritol 4-phosphate + NADP(+) = 1-deoxy-D-xylulose 5-phosphate + NADPH + H(+). Its pathway is isoprenoid biosynthesis; isopentenyl diphosphate biosynthesis via DXP pathway; isopentenyl diphosphate from 1-deoxy-D-xylulose 5-phosphate: step 1/6. In terms of biological role, catalyzes the NADPH-dependent rearrangement and reduction of 1-deoxy-D-xylulose-5-phosphate (DXP) to 2-C-methyl-D-erythritol 4-phosphate (MEP). The protein is 1-deoxy-D-xylulose 5-phosphate reductoisomerase of Microcystis aeruginosa (strain NIES-843 / IAM M-2473).